Here is a 98-residue protein sequence, read N- to C-terminus: NADH-ubiquinone oxidoreductase chain 4L (98 aa).

3 helical membrane passes run 1–21 (MSSYLTIIISFFYLGILGILL), 24–44 (LHLLSILLCFELLLISLFIWI), and 61–81 (LILLTLSACEASAGLSLMVAL).

It belongs to the complex I subunit 4L family.

It is found in the mitochondrion membrane. It catalyses the reaction a ubiquinone + NADH + 5 H(+)(in) = a ubiquinol + NAD(+) + 4 H(+)(out). In terms of biological role, core subunit of the mitochondrial membrane respiratory chain NADH dehydrogenase (Complex I) that is believed to belong to the minimal assembly required for catalysis. Complex I functions in the transfer of electrons from NADH to the respiratory chain. The immediate electron acceptor for the enzyme is believed to be ubiquinone. This chain is NADH-ubiquinone oxidoreductase chain 4L (ND4L), found in Pisaster ochraceus (Ochre sea star).